The chain runs to 842 residues: Glycogen phosphorylase, muscle form (842 aa).

Position 2 is an N-acetylserine (serine 2). A Phosphoserine; by PHK; in form phosphorylase A modification is found at serine 15. Residues aspartate 43 and tyrosine 76 each contribute to the AMP site. Phosphotyrosine occurs at positions 204 and 227. 310–319 lines the AMP pocket; the sequence is RRFKSSKFGC. The residue at position 430 (serine 430) is a Phosphoserine. Tyrosine 473 carries the phosphotyrosine modification. Phosphoserine is present on serine 514. Lysine 681 carries the post-translational modification N6-(pyridoxal phosphate)lysine. Residues serine 747 and serine 748 each carry the phosphoserine modification.

The protein belongs to the glycogen phosphorylase family. Homodimer. Homotetramer; to form the enzymatically active phosphorylase A. It depends on pyridoxal 5'-phosphate as a cofactor. In terms of processing, phosphorylation of Ser-15 converts phosphorylase B (unphosphorylated) to phosphorylase A.

The enzyme catalyses [(1-&gt;4)-alpha-D-glucosyl](n) + phosphate = [(1-&gt;4)-alpha-D-glucosyl](n-1) + alpha-D-glucose 1-phosphate. Allosterically regulated through the non-covalent binding of metabolites, being activated by AMP and inhibited by ATP, ADP, and glucose-6-phosphate. The activity is also controlled by post-translational modifications including phosphorylation. In terms of biological role, allosteric enzyme that catalyzes the rate-limiting step in glycogen catabolism, the phosphorolytic cleavage of glycogen to produce glucose-1-phosphate, and plays a central role in maintaining cellular and organismal glucose homeostasis. This Macaca fascicularis (Crab-eating macaque) protein is Glycogen phosphorylase, muscle form.